A 160-amino-acid polypeptide reads, in one-letter code: Transcriptional repressor NrdR (160 aa).

Polar residues predominate over residues 1-11 (MRCPNCNSLDT). Positions 1-20 (MRCPNCNSLDTQVKDSRPTE) are disordered. A zinc finger spans residues 3 to 34 (CPNCNSLDTQVKDSRPTEDSSVIRRRRVCIAC). Residues 49-139 (LTVIKRNGRR…VYRNFREAKD (91 aa)) form the ATP-cone domain.

The protein belongs to the NrdR family. It depends on Zn(2+) as a cofactor.

Functionally, negatively regulates transcription of bacterial ribonucleotide reductase nrd genes and operons by binding to NrdR-boxes. This is Transcriptional repressor NrdR from Rhodopseudomonas palustris (strain BisB5).